Consider the following 267-residue polypeptide: UPF0173 metal-dependent hydrolase THEYE_A0282 (267 aa).

It belongs to the UPF0173 family.

This Thermodesulfovibrio yellowstonii (strain ATCC 51303 / DSM 11347 / YP87) protein is UPF0173 metal-dependent hydrolase THEYE_A0282.